The following is a 313-amino-acid chain: Acetaldehyde dehydrogenase (313 aa).

An NAD(+)-binding site is contributed by serine 12 to isoleucine 15. Catalysis depends on cysteine 132, which acts as the Acyl-thioester intermediate. Residues serine 163–asparagine 171 and asparagine 291 each bind NAD(+).

Belongs to the acetaldehyde dehydrogenase family.

The catalysed reaction is acetaldehyde + NAD(+) + CoA = acetyl-CoA + NADH + H(+). The chain is Acetaldehyde dehydrogenase (bphG) from Burkholderia cepacia (Pseudomonas cepacia).